A 171-amino-acid chain; its full sequence is MSACISPSDALLARRLIELTQAGLPLVADPWAWIAAQLRLSEAETLALLKRLRDAGVIRRIAAVPNHYRLGYRHNGMTVWDVADERIERLGRLVGGLSFVSHCYRRPRHLPQWRYNLFAMVHGRSEAEIEGYRQQIRLLLGEDCRADEMLVSSRILKKTGLRLAQKEERPC.

The protein belongs to the Ahb/Nir family. Probably forms a complex composed of NirD, NirL, NirG and NirH. All proteins are required for the total conversion of siroheme to didecarboxysiroheme.

It catalyses the reaction siroheme + 2 H(+) = 12,18-didecarboxysiroheme + 2 CO2. It functions in the pathway porphyrin-containing compound metabolism. In terms of biological role, involved in heme d1 biosynthesis. Catalyzes the decarboxylation of siroheme into didecarboxysiroheme. This chain is Siroheme decarboxylase NirH subunit, found in Pseudomonas aeruginosa (strain ATCC 15692 / DSM 22644 / CIP 104116 / JCM 14847 / LMG 12228 / 1C / PRS 101 / PAO1).